A 533-amino-acid chain; its full sequence is UDP-glucuronosyltransferase 1-2 (533 aa).

The signal sequence occupies residues 1–27 (MDTGLCAPLRGLSGLLLLLCALPWAEG). 4 N-linked (GlcNAc...) asparagine glycosylation sites follow: Asn-133, Asn-141, Asn-295, and Asn-433. A helical transmembrane segment spans residues 491-507 (VIGFLLAIVLTVVFIVY).

The protein belongs to the UDP-glycosyltransferase family.

The protein resides in the microsome. The protein localises to the endoplasmic reticulum membrane. The enzyme catalyses glucuronate acceptor + UDP-alpha-D-glucuronate = acceptor beta-D-glucuronoside + UDP + H(+). UDPGT is of major importance in the conjugation and subsequent elimination of potentially toxic xenobiotics and endogenous compounds. The sequence is that of UDP-glucuronosyltransferase 1-2 (Ugt1a2) from Rattus norvegicus (Rat).